We begin with the raw amino-acid sequence, 491 residues long: NADH-quinone oxidoreductase subunit N 1 (491 aa).

14 helical membrane-spanning segments follow: residues 9–29 (IAAP…LDLL), 38–58 (PMYV…VPLW), 76–96 (FAAV…LLSF), 104–124 (SGYL…GGAG), 126–146 (LMVI…MIAF), 161–181 (FVLG…IYGA), 211–231 (VGVG…PFHI), 246–266 (AFMA…LLVA), 276–296 (FLLP…TVGI), 304–324 (LMAY…PGLG), 329–349 (SAAA…FAVV), 375–395 (VGVC…TGGF), 410–432 (AWIV…LKVI), and 461–481 (VVLA…GPVS).

This sequence belongs to the complex I subunit 2 family. As to quaternary structure, NDH-1 is composed of 14 different subunits. Subunits NuoA, H, J, K, L, M, N constitute the membrane sector of the complex.

It is found in the cell membrane. It catalyses the reaction a quinone + NADH + 5 H(+)(in) = a quinol + NAD(+) + 4 H(+)(out). NDH-1 shuttles electrons from NADH, via FMN and iron-sulfur (Fe-S) centers, to quinones in the respiratory chain. The immediate electron acceptor for the enzyme in this species is believed to be a menaquinone. Couples the redox reaction to proton translocation (for every two electrons transferred, four hydrogen ions are translocated across the cytoplasmic membrane), and thus conserves the redox energy in a proton gradient. This Symbiobacterium thermophilum (strain DSM 24528 / JCM 14929 / IAM 14863 / T) protein is NADH-quinone oxidoreductase subunit N 1.